Consider the following 403-residue polypeptide: Deubiquitinase and deneddylase Dub1 (403 aa).

Residues methionine 1–threonine 11 show a composition bias toward polar residues. The segment at methionine 1 to leucine 24 is disordered. A helical membrane pass occupies residues threonine 40–phenylalanine 60. Residues lysine 77–proline 132 form a disordered region. 2 stretches are compositionally biased toward pro residues: residues valine 86 to threonine 105 and proline 114 to proline 130. Active-site residues include histidine 277, aspartate 294, and cysteine 347.

This sequence belongs to the peptidase C48 family.

The protein localises to the secreted. Its subcellular location is the host cell. It localises to the membrane. Effector proteins function to alter host cell physiology and promote bacterial survival in host tissues. This protease possesses deubiquitinating and deneddylating activities. The chain is Deubiquitinase and deneddylase Dub1 (cdu1) from Chlamydia trachomatis serovar L2b (strain UCH-1/proctitis).